The chain runs to 65 residues: Toxin CsEM1 (65 aa).

One can recognise an LCN-type CS-alpha/beta domain in the interval 1-65; the sequence is KEGYLVNSYT…VWPLPNKTCN (65 aa). Cystine bridges form between C12/C64, C16/C40, C25/C45, and C29/C47.

This sequence belongs to the long (4 C-C) scorpion toxin superfamily. Sodium channel inhibitor family. Beta subfamily. Expressed by the venom gland.

The protein resides in the secreted. In terms of biological role, beta toxins bind voltage-independently at site-4 of sodium channels (Nav) and shift the voltage of activation toward more negative potentials thereby affecting sodium channel activation and promoting spontaneous and repetitive firing. Highly potent. The sequence is that of Toxin CsEM1 from Centruroides sculpturatus (Arizona bark scorpion).